The primary structure comprises 525 residues: Asparagine synthetase domain-containing protein YML096W (525 aa).

The For GATase activity role is filled by cysteine 2. Positions 2–209 (CGILLHYCPN…LNSNQRSHLP (208 aa)) constitute a Glutamine amidotransferase type-2 domain. In terms of domain architecture, Asparagine synthetase spans 210–523 (YEVTSEIDLN…GTDLLKENRN (314 aa)). The tract at residues 503 to 525 (SAKMTKDGNKHGTDLLKENRNCS) is disordered. The segment covering 506–525 (MTKDGNKHGTDLLKENRNCS) has biased composition (basic and acidic residues).

It localises to the cytoplasm. This is Asparagine synthetase domain-containing protein YML096W from Saccharomyces cerevisiae (strain ATCC 204508 / S288c) (Baker's yeast).